A 225-amino-acid chain; its full sequence is THAP domain-containing protein 1 A (225 aa).

The THAP-type zinc finger occupies 5–57; the sequence is CSAYGCKNRYDKDKPISFHKFPLKRPLLCKKWEAAVRRAEFKPTKYSSICSDH. Residues 139 to 194 are a coiled coil; sequence VEDTVHQRRRIQQLEEQVDKLRKKLKIANQKCRRQERSLEKLEREVSEYREAKGSG.

It belongs to the THAP1 family.

The protein resides in the nucleus. Its subcellular location is the nucleoplasm. In terms of biological role, DNA-binding transcription regulator that regulates endothelial cell proliferation and G1/S cell-cycle progression. Specifically binds the 5'-[AT]NTNN[GT]GGCA[AGT]-3' core DNA sequence and acts by modulating expression of pRB-E2F cell-cycle target genes. In Xenopus laevis (African clawed frog), this protein is THAP domain-containing protein 1 A (thap1-a).